We begin with the raw amino-acid sequence, 278 residues long: Probable aquaporin PIP2-8 (278 aa).

N-acetylmethionine is present on Met-1. At 1 to 36 (MSKEVSEEGRHGKDYVDPPPAPLLDMAELKLWSFYR) the chain is on the cytoplasmic side. At Lys-3 the chain carries N6,N6-dimethyllysine. Residues 37–57 (AIIAEFIATLLFLYVTVATVI) traverse the membrane as a helical segment. Over 58–74 (GHKNQTGPCGGVGLLGI) the chain is Extracellular. Residues 75 to 95 (AWAFGGMIFVLVYCTAGISGG) form a helical membrane-spanning segment. Topologically, residues 96-116 (HINPAVTFGLFLARKVSLPRA) are cytoplasmic. The NPA 1 signature appears at 98 to 100 (NPA). The helical transmembrane segment at 117 to 137 (VAYMVAQCLGAICGVGLVKAF) threads the bilayer. Topologically, residues 138 to 158 (MMTPYKRLGGGANTVADGYST) are extracellular. A helical transmembrane segment spans residues 159-179 (GTALGAEIIGTFVLVYTVFSA). The Cytoplasmic portion of the chain corresponds to 180 to 192 (TDPKRSARDSHVP). Residues 193 to 213 (VLAPLPIGFAVFMVHLATIPI) traverse the membrane as a helical segment. Topologically, residues 214–240 (TGTGINPARSFGAAVIYNNEKAWDDHW) are extracellular. An NPA 2 motif is present at residues 219 to 221 (NPA). The chain crosses the membrane as a helical span at residues 241-261 (IFWVGPFVGALAAAAYHQYIL). Over 262–278 (RAAAIKALASFRSNPTN) the chain is Cytoplasmic. Residues Ser-271 and Ser-274 each carry the phosphoserine modification.

Belongs to the MIP/aquaporin (TC 1.A.8) family. PIP (TC 1.A.8.11) subfamily. In terms of tissue distribution, expressed in roots and floral buds.

It localises to the cell membrane. Its function is as follows. Aquaporins facilitate the transport of water and small neutral solutes across cell membranes. The chain is Probable aquaporin PIP2-8 (PIP2-8) from Arabidopsis thaliana (Mouse-ear cress).